The sequence spans 217 residues: Probable GTP-binding protein EngB (217 aa).

An EngB-type G domain is found at 29 to 213 (GPPEVAFAGR…RQAIAETVGI (185 aa)). Residues 37-44 (GRSNVGKS), 64-68 (GRTQE), 91-94 (DMPG), 158-161 (TKTD), and 192-194 (TSS) contribute to the GTP site. Residues Ser-44 and Thr-66 each contribute to the Mg(2+) site.

Belongs to the TRAFAC class TrmE-Era-EngA-EngB-Septin-like GTPase superfamily. EngB GTPase family. Mg(2+) is required as a cofactor.

Necessary for normal cell division and for the maintenance of normal septation. This Rhizobium etli (strain ATCC 51251 / DSM 11541 / JCM 21823 / NBRC 15573 / CFN 42) protein is Probable GTP-binding protein EngB.